A 396-amino-acid chain; its full sequence is Methylthioribose kinase (396 aa).

ATP is bound by residues N44, K61, and 115-117 (EDL). D233 is a substrate binding site. ATP is bound at residue 250–252 (DPE). R340 serves as a coordination point for substrate.

The protein belongs to the methylthioribose kinase family. Homodimer.

The enzyme catalyses 5-(methylsulfanyl)-D-ribose + ATP = 5-(methylsulfanyl)-alpha-D-ribose 1-phosphate + ADP + H(+). It participates in amino-acid biosynthesis; L-methionine biosynthesis via salvage pathway; S-methyl-5-thio-alpha-D-ribose 1-phosphate from S-methyl-5'-thioadenosine (hydrolase route): step 2/2. Its function is as follows. Catalyzes the phosphorylation of methylthioribose into methylthioribose-1-phosphate. The protein is Methylthioribose kinase of Geobacillus kaustophilus (strain HTA426).